Reading from the N-terminus, the 600-residue chain is Albumin (600 aa).

The N-terminal stretch at 1–10 (LLFLFSSAYS) is a signal peptide. The propeptide occupies 11 to 16 (RGVFRR). Albumin domains follow at residues 11–202 (RGVF…DELR), 203–395 (DEGK…EFQP), and 396–593 (LVEE…KFVA). H19 is a Cu cation binding site. At S21 the chain carries Phosphoserine. The Ca(2+) site is built by E22 and D29. C69 and C78 are oxidised to a cystine. Phosphoserine occurs at positions 74 and 81. H83 contacts Zn(2+). 6 disulfides stabilise this stretch: C91–C107, C106–C117, C140–C185, C184–C193, C216–C262, and C261–C269. The residue at position 99 (T99) is a Phosphothreonine. K221 is modified (N6-succinyllysine). K256 serves as a coordination point for (4Z,15Z)-bilirubin IXalpha. A Ca(2+)-binding site is contributed by E260. 2 residues coordinate Zn(2+): H263 and D265. The Ca(2+) site is built by D265, E268, D271, and D275. 8 cysteine pairs are disulfide-bonded: C281–C295, C294–C305, C332–C377, C376–C385, C408–C454, C453–C464, C477–C493, and C492–C503. S289 carries the phosphoserine modification. S435 is modified (phosphoserine). T436 and T438 each carry phosphothreonine. K452 is modified (N6-succinyllysine). S505 is subject to Phosphoserine. Intrachain disulfides connect C530-C575 and C574-C583. The residue at position 535 (K535) is an N6-succinyllysine. Residue K550 is modified to N6-methyllysine. K580 is modified (N6-succinyllysine).

It belongs to the ALB/AFP/VDB family. In terms of assembly, interacts with FCGRT; this interaction regulates ALB homeostasis. Interacts with TASOR. In plasma, occurs in a covalently-linked complex with chromophore-bound alpha-1-microglobulin; this interaction does not prevent fatty acid binding to ALB. Phosphorylated by FAM20C in the extracellular medium. In terms of tissue distribution, plasma.

Its subcellular location is the secreted. In terms of biological role, binds water, Ca(2+), Na(+), K(+), fatty acids, hormones, bilirubin and drugs. Its main function is the regulation of the colloidal osmotic pressure of blood. Major zinc transporter in plasma, typically binds about 80% of all plasma zinc. Major calcium and magnesium transporter in plasma, binds approximately 45% of circulating calcium and magnesium in plasma. Potentially has more than two calcium-binding sites and might additionally bind calcium in a non-specific manner. The shared binding site between zinc and calcium at residue Asp-265 suggests a crosstalk between zinc and calcium transport in the blood. The rank order of affinity is zinc &gt; calcium &gt; magnesium. Binds to the bacterial siderophore enterobactin and inhibits enterobactin-mediated iron uptake of E.coli from ferric transferrin, and may thereby limit the utilization of iron and growth of enteric bacteria such as E.coli. Does not prevent iron uptake by the bacterial siderophore aerobactin. In Macaca mulatta (Rhesus macaque), this protein is Albumin (ALB).